The primary structure comprises 189 residues: GTPase NRas (189 aa).

GTP is bound by residues 10–18 and 29–30; these read GAGGVGKSA and VD. Positions 32–40 match the Effector region motif; it reads YDPTIEDSY. GTP is bound at residue 57–61; sequence DTAGQ. S89 bears the Phosphoserine mark. 116–119 is a GTP binding site; that stretch reads NKCD. Positions 166–185 are hypervariable region; that stretch reads YRMKKLNSNDDGTQGCMGLP. K170 participates in a covalent cross-link: Glycyl lysine isopeptide (Lys-Gly) (interchain with G-Cter in ubiquitin). C181 is lipidated: S-palmitoyl cysteine. The S-farnesyl cysteine moiety is linked to residue C186. Positions 187–189 are cleaved as a propeptide — removed in mature form; the sequence is VVM.

Belongs to the small GTPase superfamily. Ras family. As to quaternary structure, interacts (active GTP-bound form preferentially) with RGS14. Interacts (active GTP-bound form) with RASSF7. Interacts (active GTP-bound form) with both SHOC2 and PP1c (all isoforms) to form a tertiary complex; SHOC2 and PP1c preferably bind M-Ras/MRAS, but they also bind K-Ras/KRAS, N-Ras/NRAS and H-Ras/HRAS. In terms of processing, palmitoylated by the ZDHHC9-GOLGA7 complex. Depalmitoylated by ABHD17A, ABHD17B and ABHD17C. A continuous cycle of de- and re-palmitoylation regulates rapid exchange between plasma membrane and Golgi. Post-translationally, acetylation at Lys-104 prevents interaction with guanine nucleotide exchange factors (GEFs). Ubiquitinated by the BCR(LZTR1) E3 ubiquitin ligase complex at Lys-170 in a non-degradative manner, leading to inhibit Ras signaling by decreasing Ras association with membranes. In terms of processing, phosphorylation at Ser-89 enhances NRAS association with its downstream effectors.

The protein resides in the cell membrane. Its subcellular location is the golgi apparatus membrane. It carries out the reaction GTP + H2O = GDP + phosphate + H(+). Alternates between an inactive form bound to GDP and an active form bound to GTP. Activated by a guanine nucleotide-exchange factor (GEF) and inactivated by a GTPase-activating protein (GAP). Functionally, ras proteins bind GDP/GTP and possess intrinsic GTPase activity. The protein is GTPase NRas (NRAS) of Cavia porcellus (Guinea pig).